A 467-amino-acid polypeptide reads, in one-letter code: F-box only protein 6 (467 aa).

One can recognise an F-box domain in the interval 114 to 163; sequence QEIWQEFPQDLFEDVVSRLPMATFFQFRAVCRKWNALIDSDSFSRCFTEL. 3 Kelch repeats span residues 163–211, 252–305, and 406–456; these read LPQT…MASA, GMTL…NFKS, and CLGN…IACG.

In Arabidopsis thaliana (Mouse-ear cress), this protein is F-box only protein 6 (FBX6).